A 359-amino-acid polypeptide reads, in one-letter code: Phosphoserine aminotransferase (359 aa).

Arg-41 serves as a coordination point for L-glutamate. Pyridoxal 5'-phosphate is bound by residues 75–76, Trp-99, Thr-147, Asp-166, and Gln-189; that span reads AS. Position 190 is an N6-(pyridoxal phosphate)lysine (Lys-190). A pyridoxal 5'-phosphate-binding site is contributed by 231–232; it reads NT.

This sequence belongs to the class-V pyridoxal-phosphate-dependent aminotransferase family. SerC subfamily. As to quaternary structure, homodimer. The cofactor is pyridoxal 5'-phosphate.

It localises to the cytoplasm. The catalysed reaction is O-phospho-L-serine + 2-oxoglutarate = 3-phosphooxypyruvate + L-glutamate. It carries out the reaction 4-(phosphooxy)-L-threonine + 2-oxoglutarate = (R)-3-hydroxy-2-oxo-4-phosphooxybutanoate + L-glutamate. It participates in amino-acid biosynthesis; L-serine biosynthesis; L-serine from 3-phospho-D-glycerate: step 2/3. It functions in the pathway cofactor biosynthesis; pyridoxine 5'-phosphate biosynthesis; pyridoxine 5'-phosphate from D-erythrose 4-phosphate: step 3/5. In terms of biological role, catalyzes the reversible conversion of 3-phosphohydroxypyruvate to phosphoserine and of 3-hydroxy-2-oxo-4-phosphonooxybutanoate to phosphohydroxythreonine. This is Phosphoserine aminotransferase from Azobacteroides pseudotrichonymphae genomovar. CFP2.